The chain runs to 194 residues: MIHAVLIFNKKCQPRLVKFYTPVDLPKQKLLLEQVYELISQRNSDFQSSFLVTPPSLLLSNENNNDEVNNEDIQIIYKNYATLYFTFIVDDQESELAILDLIQTFVESLDRCFTEVNELDLIFNWQTLESVLEEIVQGGMVIETNVNRIVASVDELNKAAESTDSKIGRLTSTGFGSALQAFAQGGFAQWATGQ.

Belongs to the adaptor complexes small subunit family. In terms of assembly, adaptor protein complex 3 (AP-3) is a heterotetramer composed of 2 large adaptins (APL5 and APL6), a medium adaptin (APM3) and a small adaptin (APS3).

The protein localises to the golgi apparatus. Its subcellular location is the cytoplasmic vesicle membrane. Part of the AP-3 complex, an adaptor-related complex which is not clathrin-associated. The complex is associated with the Golgi region as well as more peripheral structures. It facilitates the budding of vesicles from the Golgi membrane and may be directly involved in trafficking to the vacuole. Required for the transport via the ALP pathway, which directs the transport of the cargo proteins PHO8 and VAM3 to the vacuole. This chain is AP-3 complex subunit sigma (APS3), found in Saccharomyces cerevisiae (strain ATCC 204508 / S288c) (Baker's yeast).